The sequence spans 113 residues: Small ribosomal subunit protein bS6 (113 aa).

It belongs to the bacterial ribosomal protein bS6 family.

In terms of biological role, binds together with bS18 to 16S ribosomal RNA. The chain is Small ribosomal subunit protein bS6 (rpsF) from Buchnera aphidicola subsp. Acyrthosiphon pisum (strain APS) (Acyrthosiphon pisum symbiotic bacterium).